A 481-amino-acid chain; its full sequence is Aspartyl/glutamyl-tRNA(Asn/Gln) amidotransferase subunit B (481 aa).

The segment at 29–50 is disordered; it reads SSSKSSHTDPKNTNISPIDLGH.

The protein belongs to the GatB/GatE family. GatB subfamily. Heterotrimer of A, B and C subunits.

The enzyme catalyses L-glutamyl-tRNA(Gln) + L-glutamine + ATP + H2O = L-glutaminyl-tRNA(Gln) + L-glutamate + ADP + phosphate + H(+). It carries out the reaction L-aspartyl-tRNA(Asn) + L-glutamine + ATP + H2O = L-asparaginyl-tRNA(Asn) + L-glutamate + ADP + phosphate + 2 H(+). Allows the formation of correctly charged Asn-tRNA(Asn) or Gln-tRNA(Gln) through the transamidation of misacylated Asp-tRNA(Asn) or Glu-tRNA(Gln) in organisms which lack either or both of asparaginyl-tRNA or glutaminyl-tRNA synthetases. The reaction takes place in the presence of glutamine and ATP through an activated phospho-Asp-tRNA(Asn) or phospho-Glu-tRNA(Gln). This chain is Aspartyl/glutamyl-tRNA(Asn/Gln) amidotransferase subunit B, found in Malacoplasma penetrans (strain HF-2) (Mycoplasma penetrans).